Here is a 239-residue protein sequence, read N- to C-terminus: Sugar fermentation stimulation protein homolog (239 aa).

It belongs to the SfsA family.

In Shewanella woodyi (strain ATCC 51908 / MS32), this protein is Sugar fermentation stimulation protein homolog.